Here is a 146-residue protein sequence, read N- to C-terminus: MRLLQLLFRASPATLLLVLCLQLGANKAQDNTRKIIIKDFDIPKSVRPNEEVTATLAVRTELKECMVVKTYLISSVPLEGGFNYKYTACLCNNNPKTFYWDFYTNRTVQIAAVVDVIRELGICPDDAAVIPIKSNRFYTTETLKVE.

The first 28 residues, 1–28 (MRLLQLLFRASPATLLLVLCLQLGANKA), serve as a signal peptide directing secretion. Residue Gln29 is modified to Pyrrolidone carboxylic acid. 2 disulfide bridges follow: Cys65-Cys91 and Cys89-Cys123. The N-linked (GlcNAc...) asparagine glycan is linked to Asn105.

The protein belongs to the PIP family. As to quaternary structure, monomer. Interacts with AZGP1.

The protein resides in the secreted. This chain is Prolactin-inducible protein homolog (PIP), found in Hylobates agilis (Agile gibbon).